The sequence spans 343 residues: Cytoplasmic tRNA 2-thiolation protein 1 (343 aa).

Belongs to the TtcA family. CTU1/NCS6/ATPBD3 subfamily.

Its subcellular location is the cytoplasm. The protein operates within tRNA modification; 5-methoxycarbonylmethyl-2-thiouridine-tRNA biosynthesis. Plays a central role in 2-thiolation of mcm(5)S(2)U at tRNA wobble positions of tRNA(Lys), tRNA(Glu) and tRNA(Gln). Directly binds tRNAs and probably acts by catalyzing adenylation of tRNAs, an intermediate required for 2-thiolation. It is unclear whether it acts as a sulfurtransferase that transfers sulfur from thiocarboxylated URM1 onto the uridine of tRNAs at wobble position. This Drosophila ananassae (Fruit fly) protein is Cytoplasmic tRNA 2-thiolation protein 1.